The following is a 147-amino-acid chain: 3-dehydroquinate dehydratase (147 aa).

Catalysis depends on Y22, which acts as the Proton acceptor. N76, H82, and D89 together coordinate substrate. H102 acts as the Proton donor in catalysis. Substrate is bound by residues 103–104 (IS) and R113.

The protein belongs to the type-II 3-dehydroquinase family. As to quaternary structure, homododecamer.

The catalysed reaction is 3-dehydroquinate = 3-dehydroshikimate + H2O. It functions in the pathway metabolic intermediate biosynthesis; chorismate biosynthesis; chorismate from D-erythrose 4-phosphate and phosphoenolpyruvate: step 3/7. Functionally, catalyzes a trans-dehydration via an enolate intermediate. The protein is 3-dehydroquinate dehydratase of Fusobacterium nucleatum subsp. nucleatum (strain ATCC 25586 / DSM 15643 / BCRC 10681 / CIP 101130 / JCM 8532 / KCTC 2640 / LMG 13131 / VPI 4355).